The primary structure comprises 260 residues: Proteasome subunit alpha (260 aa).

The protein belongs to the peptidase T1A family. As to quaternary structure, the 20S proteasome core is composed of 14 alpha and 14 beta subunits that assemble into four stacked heptameric rings, resulting in a barrel-shaped structure. The two inner rings, each composed of seven catalytic beta subunits, are sandwiched by two outer rings, each composed of seven alpha subunits. The catalytic chamber with the active sites is on the inside of the barrel. Has a gated structure, the ends of the cylinder being occluded by the N-termini of the alpha-subunits. Is capped at one or both ends by the proteasome regulatory ATPase, PAN.

The protein resides in the cytoplasm. Its activity is regulated as follows. The formation of the proteasomal ATPase PAN-20S proteasome complex, via the docking of the C-termini of PAN into the intersubunit pockets in the alpha-rings, triggers opening of the gate for substrate entry. Interconversion between the open-gate and close-gate conformations leads to a dynamic regulation of the 20S proteasome proteolysis activity. In terms of biological role, component of the proteasome core, a large protease complex with broad specificity involved in protein degradation. The protein is Proteasome subunit alpha of Thermococcus onnurineus (strain NA1).